We begin with the raw amino-acid sequence, 319 residues long: Putrescine hydroxycinnamoyltransferase 2 (319 aa).

Catalysis depends on proton acceptor residues His-160 and Asp-301.

It belongs to the plant acyltransferase family.

Hydroxycinnamoyl transferase that catalyzes the transfer of an acyl from p-coumaryol-CoA to putrescine, to produce coumaroyl putrescine. The chain is Putrescine hydroxycinnamoyltransferase 2 from Oryza sativa subsp. japonica (Rice).